Reading from the N-terminus, the 569-residue chain is Proline--tRNA ligase (569 aa).

It belongs to the class-II aminoacyl-tRNA synthetase family. ProS type 1 subfamily. Homodimer.

The protein resides in the cytoplasm. The catalysed reaction is tRNA(Pro) + L-proline + ATP = L-prolyl-tRNA(Pro) + AMP + diphosphate. In terms of biological role, catalyzes the attachment of proline to tRNA(Pro) in a two-step reaction: proline is first activated by ATP to form Pro-AMP and then transferred to the acceptor end of tRNA(Pro). As ProRS can inadvertently accommodate and process non-cognate amino acids such as alanine and cysteine, to avoid such errors it has two additional distinct editing activities against alanine. One activity is designated as 'pretransfer' editing and involves the tRNA(Pro)-independent hydrolysis of activated Ala-AMP. The other activity is designated 'posttransfer' editing and involves deacylation of mischarged Ala-tRNA(Pro). The misacylated Cys-tRNA(Pro) is not edited by ProRS. This chain is Proline--tRNA ligase, found in Legionella pneumophila subsp. pneumophila (strain Philadelphia 1 / ATCC 33152 / DSM 7513).